A 66-amino-acid chain; its full sequence is Large ribosomal subunit protein bL35 (66 aa).

Basic residues predominate over residues 1-16 (MPKQKTHRASAKRFKR). The tract at residues 1-21 (MPKQKTHRASAKRFKRTGSGG) is disordered.

Belongs to the bacterial ribosomal protein bL35 family.

The chain is Large ribosomal subunit protein bL35 from Streptococcus mutans serotype c (strain ATCC 700610 / UA159).